The chain runs to 134 residues: uncharacterized protein (134 aa).

This is an uncharacterized protein from Saccharomyces cerevisiae (strain ATCC 204508 / S288c) (Baker's yeast).